A 497-amino-acid chain; its full sequence is Protein DETOXIFICATION 25 (497 aa).

Helical transmembrane passes span 43-63 (LPST…QAFI), 70-90 (GLAA…GIMA), 121-141 (IVDT…GPIL), 157-177 (IYPW…MQMY), 186-206 (IIGI…WWCV), 216-236 (ALLG…VYVF), 261-281 (LSIS…IIVL), 291-311 (IAIS…NICF), 339-359 (VVLV…LAFG), 381-401 (IVLS…GVAI), 416-436 (SYYA…NFGI), and 438-458 (GLWS…CYVI).

It belongs to the multi antimicrobial extrusion (MATE) (TC 2.A.66.1) family.

The protein localises to the membrane. This chain is Protein DETOXIFICATION 25, found in Arabidopsis thaliana (Mouse-ear cress).